The following is a 2365-amino-acid chain: TRIO and F-actin-binding protein (2365 aa).

4 disordered regions span residues Val48–Leu1106, His1168–Arg1554, Leu1593–Ile1667, and Ala1679–Arg1751. The segment covering Ser132–Ser151 has biased composition (low complexity). Phosphothreonine is present on His221. Polar residues-rich tracts occupy residues Thr239 to Ser271, Arg291 to Arg375, Arg403 to Arg422, Arg429 to Arg471, Arg478 to Arg520, Arg527 to Arg569, Arg576 to Arg618, Arg625 to Thr650, Ser661 to Thr674, Arg683 to Ala701, Ser709 to Thr722, Arg745 to Arg785, and Ile807 to Ser837. An essentiel for its aggregation region spans residues Ser324 to Ser348. Residue Gln457 is modified to Phosphothreonine. The span at Thr839–Thr854 shows a compositional bias: basic and acidic residues. 3 stretches are compositionally biased toward polar residues: residues Gln855–His898, Pro913–Ser927, and Asp945–Pro994. A compositionally biased stretch (basic and acidic residues) spans Arg1045–Pro1056. Polar residues predominate over residues Ser1195–Leu1206. Basic and acidic residues-rich tracts occupy residues Glu1260–Tyr1270 and Gly1303–Glu1319. The span at Ser1332–Pro1349 shows a compositional bias: low complexity. Basic and acidic residues-rich tracts occupy residues Ser1378–Arg1387 and Thr1402–Arg1411. A compositionally biased stretch (gly residues) spans Gly1452–Gly1461. The segment covering Trp1494–Lys1508 has biased composition (basic and acidic residues). Over residues Glu1524–Pro1534 the composition is skewed to polar residues. Over residues Pro1594 to Ala1606 the composition is skewed to basic and acidic residues. Over residues Ala1645–Trp1664 the composition is skewed to polar residues. Low complexity predominate over residues Pro1696–Pro1705. Residues Lys1724–Glu1735 are compositionally biased toward basic and acidic residues. A PH domain is found at Leu1778–Arg1887. At Ser1796 the chain carries Phosphoserine. 2 disordered regions span residues Thr1889–Asp2017 and Leu2174–Asp2194. Arg1930 is modified (omega-N-methylarginine). Phosphoserine occurs at positions 1949 and 1955. Positions Thr1965–Thr1997 are enriched in basic and acidic residues. 2 coiled-coil regions span residues Ser2062 to Leu2247 and Glu2281 to Asn2361.

As to quaternary structure, isoform 1 forms aggregates. Isoform 1 binds to TRIO and F-actin. Isoform 1 may also interact with myosin II. Interacts with HECTD3. Interacts with PJVK. Interacts with TERF1; mediates TERF1 localization to the centrosome. Ubiquitinated by HECTD3, leading to its degradation by the proteasome. In terms of processing, phosphorylation at Thr-457 by PLK1 ensures mitotic progression and is essential for accurate chromosome segregation. Phosphorylation at residues Thr-221 and Thr-457 by kinase NEK2A and PLK1 coordinates TERF1 translocation from telomere to spindle pole. In terms of tissue distribution, widely expressed. Highly expressed in heart and placenta. As to expression, expressed in fetal brain, retina and cochlea but is not detectable in the other tissues.

The protein resides in the nucleus. It localises to the cytoplasm. Its subcellular location is the cytoskeleton. The protein localises to the microtubule organizing center. It is found in the centrosome. The protein resides in the midbody. It localises to the chromosome. Its subcellular location is the telomere. Regulates actin cytoskeletal organization, cell spreading and cell contraction by directly binding and stabilizing filamentous F-actin and prevents its depolymerization. May also serve as a linker protein to recruit proteins required for F-actin formation and turnover. Essential for correct mitotic progression. In terms of biological role, plays a pivotal role in the formation of stereocilia rootlets. This chain is TRIO and F-actin-binding protein (TRIOBP), found in Homo sapiens (Human).